A 247-amino-acid chain; its full sequence is MKVNPKNSPKDNLKDSPKVSARGKKVNKAWLHDHINDPYVKLAQKEGYRARAAYKLKEIDETLGLIKPGDCVVDLGSTPGAWSQYVRRKLSPTGAAAGELNGRIIGLDMLPMEPIEGVAFIQGDFREPEVLQKLEQALATDKGQVKVDLVISDMAPNLSGIESADAARIVHLVELAVEFAQNRMKPDGTLVVKLFHGSGYDELVKLFRATFKVVKPMKPKASRSNSSETFLVGKGLKKRAETVPELA.

The tract at residues 1–21 (MKVNPKNSPKDNLKDSPKVSA) is disordered. Over residues 8–17 (SPKDNLKDSP) the composition is skewed to basic and acidic residues. Residues Gly80, Trp82, Asp108, Asp124, and Asp153 each coordinate S-adenosyl-L-methionine. Lys193 acts as the Proton acceptor in catalysis.

The protein belongs to the class I-like SAM-binding methyltransferase superfamily. RNA methyltransferase RlmE family.

It is found in the cytoplasm. The enzyme catalyses uridine(2552) in 23S rRNA + S-adenosyl-L-methionine = 2'-O-methyluridine(2552) in 23S rRNA + S-adenosyl-L-homocysteine + H(+). Its function is as follows. Specifically methylates the uridine in position 2552 of 23S rRNA at the 2'-O position of the ribose in the fully assembled 50S ribosomal subunit. This Polaromonas sp. (strain JS666 / ATCC BAA-500) protein is Ribosomal RNA large subunit methyltransferase E.